Here is a 495-residue protein sequence, read N- to C-terminus: MSLRIYNTLSGKVEEFVPINPPKVLIYTCGVTVYDDSHVGHGRSLIVFDVFRRFLEHLGYQVKFVRNFTDVDDKIINRAKQECTDFMTIADRYIARYYVDMENIRVRPADVEPRVTEHIPEIIEVIQKLVEKGYAYVVEGDVYFSVKKFKDYGKLSKRDIEELIAGARVEPSEKKRDPLDFALWKASKAGEPAWDSPWGKGRPGWHTECVAMVFKHLGETIDIHGGGLDLVFPHHENEIAQAEAITGKPFARYWMHNGLVTVGGQKMSKSLGNYVTLREVYTKYHPDVLRLLVLFTHYRSPLDFSWEKMEETLKAYERLKNAIEDLELLKKLQVVESKEGGTHPLYEQVKEFEENFYASLSDDFNTPEALSHVYKLVGELNKVKNKAYSEGKITDRELSAYEFASKSLLNTMKKIFGLLEDLYPECKVERVVERELEAGQVFDEKLIQILIEARNIARKEKVFKVADYIRDKLKELGIVLEDTPAGTKWKKREGA.

C29 provides a ligand contact to Zn(2+). A 'HIGH' region motif is present at residues 31–41; the sequence is VTVYDDSHVGH. Residues C209, H234, and E238 each contribute to the Zn(2+) site. The short motif at 266 to 270 is the 'KMSKS' region element; the sequence is KMSKS. K269 is a binding site for ATP.

It belongs to the class-I aminoacyl-tRNA synthetase family. In terms of assembly, monomer. Zn(2+) is required as a cofactor.

The protein localises to the cytoplasm. It carries out the reaction tRNA(Cys) + L-cysteine + ATP = L-cysteinyl-tRNA(Cys) + AMP + diphosphate. In Aquifex aeolicus (strain VF5), this protein is Cysteine--tRNA ligase (cysS).